Consider the following 466-residue polypeptide: Ras-GEF domain-containing family member 1C (466 aa).

Residues Met1–Pro23 are compositionally biased toward polar residues. Disordered stretches follow at residues Met1 to Asp35 and Ser443 to Thr466. One can recognise an N-terminal Ras-GEF domain in the interval Leu34–Ala164. One can recognise a Ras-GEF domain in the interval Asp200–Pro446.

Guanine nucleotide exchange factor (GEF). The protein is Ras-GEF domain-containing family member 1C (RASGEF1C) of Macaca fascicularis (Crab-eating macaque).